The primary structure comprises 193 residues: Dihydrofolate reductase (193 aa).

The DHFR domain maps to 1 to 193 (MIKLVFRYSP…VTTLTESVYK (193 aa)). NADP(+) is bound by residues Arg-7, 22–27 (FGLGDG), 52–55 (GAKT), and 73–77 (DLARD).

The protein belongs to the dihydrofolate reductase family.

The enzyme catalyses (6S)-5,6,7,8-tetrahydrofolate + NADP(+) = 7,8-dihydrofolate + NADPH + H(+). Its pathway is cofactor biosynthesis; tetrahydrofolate biosynthesis; 5,6,7,8-tetrahydrofolate from 7,8-dihydrofolate: step 1/1. Its function is as follows. Key enzyme in folate metabolism. Catalyzes an essential reaction for de novo glycine and purine synthesis, and for DNA precursor synthesis. In Escherichia coli (Bacteriophage T4), this protein is Dihydrofolate reductase (frd).